Reading from the N-terminus, the 110-residue chain is PCNA-associated factor (110 aa).

Lysine 15 participates in a covalent cross-link: Glycyl lysine isopeptide (Lys-Gly) (interchain with G-Cter in ubiquitin). The D-box motif lies at 23-34; it reads RKVLGSSTFVTN. The residue at position 24 (lysine 24) is an N6-acetyllysine; alternate. Lysine 24 participates in a covalent cross-link: Glycyl lysine isopeptide (Lys-Gly) (interchain with G-Cter in ubiquitin); alternate. A phosphoserine mark is found at serine 28 and serine 71. Positions 28–39 are enriched in low complexity; sequence SSTFVTNSSSSS. A disordered region spans residues 28–110; the sequence is SSTFVTNSSS…QPDHRDDENE (83 aa). The short motif at 61–71 is the PIP-box element; that stretch reads QKGIGEFFRLS. Basic and acidic residues predominate over residues 71-80; that stretch reads SPKESKKENQ. The KEN box signature appears at 77–79; that stretch reads KEN. Residues 84 to 96 carry the Initiation motif motif; sequence EAGTSGLGKAKRK.

As to quaternary structure, interacts (when monoubiquitinated at Lys-15 and Lys-24) with PCNA. Interacts with isoform 2/p33ING1b of ING1. Interacts with BRCA1. Post-translationally, monoubiquitinated at Lys-15 and Lys-24 during normal S phase, promoting its association with PCNA. Also diubiquitinated at these 2 sites. Following DNA damage, monoubiquitin chains at Lys-15 and Lys-24 are probably extended, leading to disrupt the interaction with PCNA. Polyubiquitinated by the APC/C complex at the mitotic exit, leading to its degradation by the proteasome.

It localises to the nucleus. The protein localises to the cytoplasm. It is found in the perinuclear region. PCNA-binding protein that acts as a regulator of DNA repair during DNA replication. Following DNA damage, the interaction with PCNA is disrupted, facilitating the interaction between monoubiquitinated PCNA and the translesion DNA synthesis DNA polymerase eta (POLH) at stalled replisomes, facilitating the bypass of replication-fork-blocking lesions. Also acts as a regulator of centrosome number. The sequence is that of PCNA-associated factor from Mus musculus (Mouse).